The chain runs to 331 residues: Glycine betaine/proline betaine-binding periplasmic protein (331 aa).

An N-terminal signal peptide occupies residues 1 to 21 (MRHTVIFASAFATLVTASAFA). Substrate-binding positions include Trp-86, His-90, and 161–163 (WGC). Cys-157 and Cys-163 are joined by a disulfide.

In terms of assembly, the complex is composed of two ATP-binding proteins (ProV), two transmembrane proteins (ProW) and a solute-binding protein (ProX).

Its subcellular location is the periplasm. In terms of biological role, part of the ProU ABC transporter complex involved in glycine betaine and proline betaine uptake. Binds glycine betaine and proline betaine with high affinity. The sequence is that of Glycine betaine/proline betaine-binding periplasmic protein (proX) from Salmonella typhimurium (strain LT2 / SGSC1412 / ATCC 700720).